We begin with the raw amino-acid sequence, 375 residues long: Alcohol dehydrogenase 1A (375 aa).

Ser2 carries the post-translational modification N-acetylserine. Phosphoserine is present on Ser23. Tyr35 carries the post-translational modification Phosphotyrosine. Position 47 (Cys47) interacts with Zn(2+). 48 to 52 (GTDDH) contributes to the NAD(+) binding site. Positions 68, 98, 101, 104, 112, and 175 each coordinate Zn(2+). Residues 200-205 (GLGGVG), Asp224, Lys229, Ile270, 293-295 (VGV), 318-320 (AVY), and Arg370 each bind NAD(+).

This sequence belongs to the zinc-containing alcohol dehydrogenase family. As to quaternary structure, dimer of identical or heterodimer of closely related subunits alpha, beta, or gamma that are encoded by genes ADH1A, ADH1B, and ADH1C, respectively. Requires Zn(2+) as cofactor.

It localises to the cytoplasm. It catalyses the reaction a primary alcohol + NAD(+) = an aldehyde + NADH + H(+). The enzyme catalyses a secondary alcohol + NAD(+) = a ketone + NADH + H(+). It carries out the reaction butan-1-ol + NAD(+) = butanal + NADH + H(+). The catalysed reaction is 1-propanol + NAD(+) = propanal + NADH + H(+). It catalyses the reaction propan-2-ol + NAD(+) = acetone + NADH + H(+). Alcohol dehydrogenase. Oxidizes primary as well as secondary alcohols. Ethanol is a very poor substrate. In Macaca mulatta (Rhesus macaque), this protein is Alcohol dehydrogenase 1A (ADH1A).